The primary structure comprises 207 residues: Thiamine-phosphate synthase (207 aa).

Residues 36-40 and Asn-68 each bind 4-amino-2-methyl-5-(diphosphooxymethyl)pyrimidine; that span reads QLRMK. The Mg(2+) site is built by Asp-69 and Asp-88. Residue Ser-106 coordinates 4-amino-2-methyl-5-(diphosphooxymethyl)pyrimidine. 132 to 134 contacts 2-[(2R,5Z)-2-carboxy-4-methylthiazol-5(2H)-ylidene]ethyl phosphate; sequence TNT. Position 135 (Lys-135) interacts with 4-amino-2-methyl-5-(diphosphooxymethyl)pyrimidine. 2-[(2R,5Z)-2-carboxy-4-methylthiazol-5(2H)-ylidene]ethyl phosphate-binding positions include Gly-162 and 182–183; that span reads VS.

It belongs to the thiamine-phosphate synthase family. It depends on Mg(2+) as a cofactor.

It carries out the reaction 2-[(2R,5Z)-2-carboxy-4-methylthiazol-5(2H)-ylidene]ethyl phosphate + 4-amino-2-methyl-5-(diphosphooxymethyl)pyrimidine + 2 H(+) = thiamine phosphate + CO2 + diphosphate. It catalyses the reaction 2-(2-carboxy-4-methylthiazol-5-yl)ethyl phosphate + 4-amino-2-methyl-5-(diphosphooxymethyl)pyrimidine + 2 H(+) = thiamine phosphate + CO2 + diphosphate. The catalysed reaction is 4-methyl-5-(2-phosphooxyethyl)-thiazole + 4-amino-2-methyl-5-(diphosphooxymethyl)pyrimidine + H(+) = thiamine phosphate + diphosphate. It participates in cofactor biosynthesis; thiamine diphosphate biosynthesis; thiamine phosphate from 4-amino-2-methyl-5-diphosphomethylpyrimidine and 4-methyl-5-(2-phosphoethyl)-thiazole: step 1/1. In terms of biological role, condenses 4-methyl-5-(beta-hydroxyethyl)thiazole monophosphate (THZ-P) and 2-methyl-4-amino-5-hydroxymethyl pyrimidine pyrophosphate (HMP-PP) to form thiamine monophosphate (TMP). This chain is Thiamine-phosphate synthase, found in Methanococcus maripaludis (strain C5 / ATCC BAA-1333).